Here is a 167-residue protein sequence, read N- to C-terminus: Menaquinol:cytochrome c reductase iron-sulfur subunit (167 aa).

Residues 59–158 form the Rieske domain; sequence TKEPQRFDFK…QEVKDGFLYL (100 aa). 4 residues coordinate [2Fe-2S] cluster: Cys-100, His-102, Cys-121, and His-124. Cysteines 105 and 123 form a disulfide.

Belongs to the Rieske iron-sulfur protein family. In terms of assembly, the main subunits of the menaquinol:cytochrome c complex are a Rieske-type iron-sulfur protein (QcrA), a cytochrome b (QcrB) and a cytochrome c (QcrC). It depends on [2Fe-2S] cluster as a cofactor.

Functionally, component of the menaquinol:cytochrome c reductase complex. The Rieske protein is a high potential 2Fe-2S protein. This chain is Menaquinol:cytochrome c reductase iron-sulfur subunit (qcrA), found in Bacillus subtilis (strain 168).